Consider the following 707-residue polypeptide: Matrix metalloproteinase-9 (707 aa).

The N-terminal stretch at 1–19 is a signal peptide; sequence MSLWQPLVLVLLVLGCCFA. A propeptide spans 20-93 (activation peptide); it reads APRQRQSTLV…GELDSATLKA (74 aa). The N-linked (GlcNAc...) asparagine glycan is linked to N38. The Cysteine switch signature appears at 97-104; that stretch reads PRCGVPDL. C99 lines the Zn(2+) pocket. N120 and N127 each carry an N-linked (GlcNAc...) asparagine glycan. Residues D131 and D165 each contribute to the Ca(2+) site. Zn(2+) is bound by residues H175 and D177. Residues D182, G183, D185, and L187 each contribute to the Ca(2+) site. H190 contacts Zn(2+). Ca(2+)-binding residues include G197, Q199, and D201. H203 contributes to the Zn(2+) binding site. The Ca(2+) site is built by D205, D206, and E208. Fibronectin type-II domains are found at residues 225–273, 283–331, and 342–390; these read ADGA…FCPS, ADGK…FCPT, and SAGE…FCPD. 6 disulfide bridges follow: C230-C256, C244-C271, C288-C314, C302-C329, C347-C373, and C361-C388. A Zn(2+)-binding site is contributed by H401. The active site involves E402. Positions 405 and 411 each coordinate Zn(2+). Positions 431–508 are disordered; the sequence is LHKDDVNGIR…AGPSTATTVP (78 aa). 2 stretches are compositionally biased toward pro residues: residues 452–475 and 486–499; these read RPPTTTTPQPTAPPTVCPTGPPTV and TGPPSAGPTGPPTA. C516 and C704 are disulfide-bonded. 4 Hemopexin repeats span residues 518 to 563, 564 to 608, 610 to 657, and 658 to 704; these read VNIF…WPAL, PRKL…GLGA, VAQV…FPGV, and PLDT…ILQC.

The protein belongs to the peptidase M10A family. Exists as monomer or homodimer; disulfide-linked. Also exists as heterodimer with LCN2. Macrophages and transformed cell lines produce only the monomeric form. Interacts with ECM1. In terms of assembly, (Microbial infection) Interacts with Staphylococcus aureus protein SSL5; this interaction inhibits MMP9 activity. The cofactor is Zn(2+). Ca(2+) serves as cofactor. Post-translationally, processing of the precursor yields different active forms of 64, 67 and 82 kDa. Sequentially processing by MMP3 yields the 82 kDa matrix metalloproteinase-9. In terms of processing, N- and O-glycosylated. As to expression, detected in neutrophils (at protein level). Produced by normal alveolar macrophages and granulocytes.

It is found in the secreted. It localises to the extracellular space. The protein localises to the extracellular matrix. The enzyme catalyses Cleavage of gelatin types I and V and collagen types IV and V.. Inhibited by histatin-3 1/24 (histatin-5). Inhibited by ECM1. Matrix metalloproteinase that plays an essential role in local proteolysis of the extracellular matrix and in leukocyte migration. Could play a role in bone osteoclastic resorption. Cleaves KiSS1 at a Gly-|-Leu bond. Cleaves NINJ1 to generate the Secreted ninjurin-1 form. Cleaves type IV and type V collagen into large C-terminal three quarter fragments and shorter N-terminal one quarter fragments. Degrades fibronectin but not laminin or Pz-peptide. The sequence is that of Matrix metalloproteinase-9 (MMP9) from Homo sapiens (Human).